Reading from the N-terminus, the 72-residue chain is Putative snRNP Sm-like protein (72 aa).

Positions 4-72 (RPLDILNDAL…RGDNVVYVSP (69 aa)) constitute a Sm domain.

It belongs to the snRNP Sm proteins family.

The protein is Putative snRNP Sm-like protein of Methanococcoides burtonii (strain DSM 6242 / NBRC 107633 / OCM 468 / ACE-M).